Reading from the N-terminus, the 210-residue chain is Protein GET1 (210 aa).

Residues 1-4 (MPSL) lie on the Lumenal side of the membrane. A helical membrane pass occupies residues 5–24 (LIIVLIIHVVTYLINTIGAN). Residues 25 to 110 (TIDSLLWLLY…SFDLAVKSVR (86 aa)) are Cytoplasmic-facing. Positions 39–95 (NQTSQTADEQRRLKREVMQLKREMNATSSQDEFAKWAKLRRRHDKTMEEYEAKNKAL) form a coiled coil. Residues 111–131 (FFSTTGLKLFLQFWFSKTPIF) traverse the membrane as a helical segment. At 132-155 (ELPRGWIPWQVEWVLSFPRAPLGT) the chain is on the lumenal side. Residues 156 to 172 (VSIQIWGGVCATVVSLA) traverse the membrane as a helical segment. Topologically, residues 173–210 (GDAIGVVNVYLTSKAPKQKEPATSGENSARPMAIKKEL) are cytoplasmic. Residues 189–210 (KQKEPATSGENSARPMAIKKEL) are disordered.

The protein belongs to the WRB/GET1 family. Interacts with GET3.

The protein localises to the endoplasmic reticulum membrane. In terms of biological role, required for the post-translational delivery of tail-anchored (TA) proteins to the endoplasmic reticulum. Acts as a membrane receptor for soluble GET3, which recognizes and selectively binds the transmembrane domain of TA proteins in the cytosol. The chain is Protein GET1 from Coccidioides posadasii (strain C735) (Valley fever fungus).